Reading from the N-terminus, the 53-residue chain is Tsetse thrombin inhibitor (53 aa).

The signal sequence occupies residues 1–21; the sequence is MKFFTVLFFLLSIIYLIVAAP.

As to expression, expressed at high levels in salivary glands and midguts of adult tsetse flies.

It is found in the secreted. In terms of biological role, potent and specific inhibitor of human thrombin. It is also a potent inhibitor of thrombin-induced platelet aggregation. It is capable of antagonizing host hemostasis and facilitating blood feeding. This Glossina morsitans morsitans (Savannah tsetse fly) protein is Tsetse thrombin inhibitor (TTI).